Here is a 192-residue protein sequence, read N- to C-terminus: GTP cyclohydrolase-2 (192 aa).

Position 50-54 (50-54 (RLHSE)) interacts with GTP. The Zn(2+) site is built by cysteine 55, cysteine 66, and cysteine 68. Residues 92–94 (EGR) and threonine 114 contribute to the GTP site. The active-site Proton acceptor is the aspartate 126. The active-site Nucleophile is arginine 128. GTP-binding residues include threonine 149 and lysine 154.

Belongs to the GTP cyclohydrolase II family. Requires Zn(2+) as cofactor.

The catalysed reaction is GTP + 4 H2O = 2,5-diamino-6-hydroxy-4-(5-phosphoribosylamino)-pyrimidine + formate + 2 phosphate + 3 H(+). It functions in the pathway cofactor biosynthesis; riboflavin biosynthesis; 5-amino-6-(D-ribitylamino)uracil from GTP: step 1/4. Catalyzes the conversion of GTP to 2,5-diamino-6-ribosylamino-4(3H)-pyrimidinone 5'-phosphate (DARP), formate and pyrophosphate. This Helicobacter pylori (strain P12) protein is GTP cyclohydrolase-2.